Reading from the N-terminus, the 350-residue chain is Protein XRP2 (350 aa).

The span at 1–10 (MGCFFSKRRK) shows a compositional bias: basic residues. The tract at residues 1-31 (MGCFFSKRRKADKESRPENEEERPKQYSWDQ) is disordered. Residue glycine 2 is the site of N-myristoyl glycine attachment. Cysteine 3 carries the S-palmitoyl cysteine lipid modification. Basic and acidic residues predominate over residues 11–31 (ADKESRPENEEERPKQYSWDQ). Positions 24-179 (PKQYSWDQRE…TWSNIHDFTP (156 aa)) constitute a C-CAP/cofactor C-like domain. Residues 98 to 99 (GS) and 115 to 118 (QQFR) contribute to the GTP site.

Belongs to the TBCC family. In terms of assembly, found in a complex with ARL3, RP2 and UNC119 (or UNC119B); RP2 induces hydrolysis of GTP ARL3 in the complex, leading to the release of UNC119 (or UNC119B). Interacts with ARL3; interaction is direct and stimulated with the activated GTP-bound form of ARL3. In terms of processing, myristoylated on Gly-2; which may be required for membrane targeting. Post-translationally, palmitoylated on Cys-3; which may be required for plasma membrane targeting. Mutation of Cys-3 targets the protein to internal membranes. Ubiquitous. Expressed in the rod and cone photoreceptors, extending from the tips of the outer segment (OS) through the inner segment (IS) and outer nuclear layer (ONL) and into the synaptic terminals of the outer plexiform layer (ONL). Also detected in the bipolar, horizontal and amacrine cells in the inner nuclear layer (INL), extending to the inner plexiform layer (IPL) and though the ganglion cell layer (GCL) and into the nerve fiber layer (NFL) (at protein level).

It is found in the cell membrane. It localises to the cell projection. The protein resides in the cilium. Acts as a GTPase-activating protein (GAP) involved in trafficking between the Golgi and the ciliary membrane. Involved in localization of proteins, such as NPHP3, to the cilium membrane by inducing hydrolysis of GTP ARL3, leading to the release of UNC119 (or UNC119B). Acts as a GTPase-activating protein (GAP) for tubulin in concert with tubulin-specific chaperone C, but does not enhance tubulin heterodimerization. Acts as a guanine nucleotide dissociation inhibitor towards ADP-ribosylation factor-like proteins. The chain is Protein XRP2 (RP2) from Homo sapiens (Human).